The primary structure comprises 128 residues: Secreted RxLR effector protein RXLR-C09 (128 aa).

Positions 1–22 (MRFCLVFIRLAAFVILSGGATS) are cleaved as a signal peptide. Residues 58-75 (RLLRLNDQADISGHDEER) carry the RxLR-dEER motif.

It belongs to the RxLR effector family.

It localises to the secreted. The protein resides in the host cell membrane. The protein localises to the host nucleus. Its function is as follows. Secreted effector that suppresses pattern-triggered immunity (PTI) in plant host. The polypeptide is Secreted RxLR effector protein RXLR-C09 (Plasmopara halstedii (Downy mildew of sunflower)).